The primary structure comprises 509 residues: Zinc finger CCCH-type with G patch domain-containing protein (509 aa).

The segment at 41 to 61 is disordered; that stretch reads TRGSEPEATSDTKTPETSDNI. Residues 47 to 58 are compositionally biased toward polar residues; that stretch reads EATSDTKTPETS. A C3H1-type zinc finger spans residues 155–178; it reads PCNYFLEGECRFDEVRCRYSHGAL. Positions 254–278 are disordered; that stretch reads DDDLTSESEESNETDGSDAGNDSDM. Positions 310–356 constitute a G-patch domain; the sequence is TRGIGSKLMANMGYIHGTGLGSDGRGIVTPVSAQILPQGRSLDACME. The disordered stretch occupies residues 410–433; sequence GSQQTENANKKTKPNNLQQHSNKT. Residues 423-433 are compositionally biased toward polar residues; sequence PNNLQQHSNKT.

The protein resides in the nucleus. Its function is as follows. Transcription repressor. This chain is Zinc finger CCCH-type with G patch domain-containing protein, found in Drosophila mojavensis (Fruit fly).